The following is a 335-amino-acid chain: Nuclear transcription factor Y subunit gamma (335 aa).

The protein belongs to the NFYC/HAP5 subunit family. In terms of assembly, heterotrimeric transcription factor composed of three components, NF-YA, NF-YB and NF-YC. NF-YB and NF-YC must interact and dimerize for NF-YA association and DNA binding.

It localises to the nucleus. Functionally, component of the sequence-specific heterotrimeric transcription factor (NF-Y) which specifically recognizes a 5'-CCAAT-3' box motif found in the promoters of its target genes. NF-Y can function as both an activator and a repressor, depending on its interacting cofactors. The polypeptide is Nuclear transcription factor Y subunit gamma (Nfyc) (Rattus norvegicus (Rat)).